A 552-amino-acid chain; its full sequence is Glucose-6-phosphate isomerase (552 aa).

Glutamate 359 serves as the catalytic Proton donor. Active-site residues include histidine 390 and lysine 514.

It belongs to the GPI family.

The protein resides in the cytoplasm. The enzyme catalyses alpha-D-glucose 6-phosphate = beta-D-fructose 6-phosphate. It participates in carbohydrate biosynthesis; gluconeogenesis. The protein operates within carbohydrate degradation; glycolysis; D-glyceraldehyde 3-phosphate and glycerone phosphate from D-glucose: step 2/4. Functionally, catalyzes the reversible isomerization of glucose-6-phosphate to fructose-6-phosphate. In Streptomyces griseus subsp. griseus (strain JCM 4626 / CBS 651.72 / NBRC 13350 / KCC S-0626 / ISP 5235), this protein is Glucose-6-phosphate isomerase.